The chain runs to 324 residues: Glucosyl-3-phosphoglycerate synthase (324 aa).

UDP-alpha-D-glucose contacts are provided by residues 50–54 (PALNE), Ser81, Lys114, and 134–135 (DS). A Mn(2+)-binding site is contributed by Asp136. Position 184–187 (184–187 (GRVT)) interacts with (2R)-3-phosphoglycerate. UDP-alpha-D-glucose-binding positions include 229–232 (YGVE) and 256–261 (RAHRNR). Mn(2+) is bound at residue His258. Asn260 lines the (2R)-3-phosphoglycerate pocket.

This sequence belongs to the glycosyltransferase 2 family. As to quaternary structure, homotrimer. Requires Mg(2+) as cofactor. It depends on Mn(2+) as a cofactor.

It catalyses the reaction an NDP-alpha-D-glucose + (2R)-3-phosphoglycerate = (2R)-2-O-(alpha-D-glucopyranosyl)-3-phospho-glycerate + a ribonucleoside 5'-diphosphate + H(+). The catalysed reaction is (2R)-3-phosphoglycerate + UDP-alpha-D-glucose = (2R)-2-O-(alpha-D-glucopyranosyl)-3-phospho-glycerate + UDP + H(+). The enzyme catalyses ADP-alpha-D-glucose + (2R)-3-phosphoglycerate = (2R)-2-O-(alpha-D-glucopyranosyl)-3-phospho-glycerate + ADP + H(+). It carries out the reaction GDP-D-glucose + (2R)-3-phosphoglycerate = (2R)-2-O-(alpha-D-glucopyranosyl)-3-phospho-glycerate + GDP + H(+). Functionally, involved in the biosynthesis of 6-O-methylglucose lipopolysaccarides (MGLPs). Catalyzes the transfer of the glucose moiety from a nuleotide sugar such as UDP-alpha-D-glucose to the position 2 of 3-phospho-D-glycerate (3-PGA) to form glucosyl-3-phosphoglycerate (GPG). It can use UDP-glucose, ADP-glucose and GDP-glucose as sugar donor substrates with decreasing affinity and with 3-PGA as an acceptor. D-glycerate can only be an acceptor with ADP-glucose and at a very low rate. The sequence is that of Glucosyl-3-phosphoglycerate synthase (gpgS) from Mycobacterium bovis (strain ATCC BAA-935 / AF2122/97).